We begin with the raw amino-acid sequence, 640 residues long: Chaperone protein DnaK (640 aa).

Residue T199 is modified to Phosphothreonine; by autocatalysis. The span at 606–621 shows a compositional bias: low complexity; sequence QQAAGAGAQQADGTGK. The interval 606–640 is disordered; the sequence is QQAAGAGAQQADGTGKAADDGVVDAEFEEVKEDNK. Residues 626-640 show a composition bias toward acidic residues; the sequence is GVVDAEFEEVKEDNK.

The protein belongs to the heat shock protein 70 family.

Functionally, acts as a chaperone. The protein is Chaperone protein DnaK of Cellvibrio japonicus (strain Ueda107) (Pseudomonas fluorescens subsp. cellulosa).